The sequence spans 596 residues: V-type ATP synthase alpha chain (596 aa).

233-240 contributes to the ATP binding site; it reads GPFGAGKT.

It belongs to the ATPase alpha/beta chains family.

The catalysed reaction is ATP + H2O + 4 H(+)(in) = ADP + phosphate + 5 H(+)(out). In terms of biological role, produces ATP from ADP in the presence of a proton gradient across the membrane. The V-type alpha chain is a catalytic subunit. This chain is V-type ATP synthase alpha chain, found in Streptococcus sanguinis (strain SK36).